Reading from the N-terminus, the 307-residue chain is Heme A synthase (307 aa).

The Cytoplasmic segment spans residues 1–6; that stretch reads MKFALR. A helical transmembrane segment spans residues 7 to 27; it reads LLSVITTFVMLIVLIGGALVT. Topologically, residues 28-65 are extracellular; the sequence is KTGSGLGCGRQWPLCHGRFFPEMNPASIIEWSHRMSTG. The cysteines at positions 35 and 42 are disulfide-linked. Residue Glu57 is part of the active site. A heme o-binding site is contributed by His60. Residues 66–86 traverse the membrane as a helical segment; sequence VSTILVLALAVLCWKKISPVF. Topologically, residues 87–92 are cytoplasmic; it reads RETKFL. The helical transmembrane segment at 93-113 threads the bilayer; it reads VIMSIIFLLLQALLGALAVVF. Residues 114–121 lie on the Extracellular side of the membrane; the sequence is GSNALVMA. The chain crosses the membrane as a helical span at residues 122-142; it reads LHFGISLISFASVLLLALLVF. Heme o is bound at residue His123. The Cytoplasmic segment spans residues 143-161; it reads EATRSETKLVKPLHIGKKM. A helical transmembrane segment spans residues 162 to 182; it reads QFHIYGLITYTYIVVYTGAYV. Over 183 to 216 the chain is Extracellular; sequence RHTKSSLACSVFPFCSKDGALPAYFNQWVQMSHR. A disulfide bridge links Cys191 with Cys197. Heme b is bound at residue His215. The chain crosses the membrane as a helical span at residues 217 to 237; sequence AAALLLFVWIFVAMFHAMKHY. Residues 238-242 are Cytoplasmic-facing; the sequence is KEQKQ. A helical membrane pass occupies residues 243–263; it reads LYYGWIISAILITLQAISGVM. Residues 264 to 274 lie on the Extracellular side of the membrane; that stretch reads SVYSQLALGYA. A helical membrane pass occupies residues 275–295; that stretch reads LAHSFFISCLFGVLCYFCLLI. His277 provides a ligand contact to heme b. Topologically, residues 296-307 are cytoplasmic; that stretch reads ARFKYESKEPFK.

Belongs to the COX15/CtaA family. Type 1 subfamily. Interacts with CtaB. Heme b serves as cofactor.

Its subcellular location is the cell membrane. The enzyme catalyses Fe(II)-heme o + 2 A + H2O = Fe(II)-heme a + 2 AH2. It functions in the pathway porphyrin-containing compound metabolism; heme A biosynthesis; heme A from heme O: step 1/1. In terms of biological role, catalyzes the conversion of heme O to heme A by two successive hydroxylations of the methyl group at C8. The first hydroxylation forms heme I, the second hydroxylation results in an unstable dihydroxymethyl group, which spontaneously dehydrates, resulting in the formyl group of heme A. The chain is Heme A synthase from Bacillus pumilus (strain SAFR-032).